Consider the following 363-residue polypeptide: Zinc finger CCCH domain-containing protein 53 (363 aa).

The C3H1-type zinc finger occupies 154-181; that stretch reads KNRPKICSFYTIGQCKRGAECSFRHEMP. Residues 225-310 enclose the RRM domain; sequence KTLYVGGLNS…PPNEYSHYPS (86 aa). A disordered region spans residues 281-348; the sequence is LISQQQNQHS…SYSYPMPPHQ (68 aa). Residues 283 to 297 are compositionally biased toward low complexity; it reads SQQQNQHSQMQQYYM. Over residues 320-336 the composition is skewed to polar residues; the sequence is FSTQESDGSSTSENNRA.

The chain is Zinc finger CCCH domain-containing protein 53 from Arabidopsis thaliana (Mouse-ear cress).